The chain runs to 488 residues: Microtubule-destabilizing protein 60 (488 aa).

Polar residues predominate over residues Ala-25–Lys-56. Disordered stretches follow at residues Ala-25–Pro-71, His-262–Gln-304, and Asp-436–Asn-457. Positions Ser-264–Gly-280 are enriched in low complexity.

It belongs to the TPX2 family.

The protein resides in the cytoplasm. It is found in the cytoskeleton. Binds directly to microtubules. Microtubule-destabilizing protein involved in the PIF3-dependent positive regulation of hypocotyl cell elongation via the modulation of cortical microtubules dynamic in response to light and ethylene signaling. Promotes submergence-induced and ethylene-dependent underwater hypocotyl elongation. This chain is Microtubule-destabilizing protein 60, found in Arabidopsis thaliana (Mouse-ear cress).